Consider the following 165-residue polypeptide: Putative pre-16S rRNA nuclease (165 aa).

Belongs to the YqgF nuclease family.

It localises to the cytoplasm. In terms of biological role, could be a nuclease involved in processing of the 5'-end of pre-16S rRNA. This is Putative pre-16S rRNA nuclease from Beijerinckia indica subsp. indica (strain ATCC 9039 / DSM 1715 / NCIMB 8712).